A 417-amino-acid polypeptide reads, in one-letter code: MFPRDVRIESYDPELAKAIAAETQRQEDHVELIASENYTSPAVMEAQGSQLTNKYAEGYPGKRYYGGCEYVDIAEQLAIDRLKQLFGADYANVQPHSGSQANQAVYFALLQPGDTILGMSLAHGGHLTHGAKVNASGKLFNAVQYGVNDQGLIDYDEVERLALEHKPKMVVAGFSAYSQVIDWARFRAIADKVGAYLFVDMAHVAGLVAAGVYPSPLEHAHVVTSTTHKTLRGPRGGIIVAKGADEDLVKKLQSIVFPGIQGGPLMHVIAGKAVAFKEALEPGFKAYQQQVVKNAQAMANTLIERGYKIVSGGTQNHLMLVDMIGKDVSGKDAEAALGKAHITVNKNSVPNDPRSPFVTSGLRLGTPAVTTRGYVEQDCVDLANWIADVLDAPNDDAVIARVRDAVSAQCRKYPVYG.

(6S)-5,6,7,8-tetrahydrofolate contacts are provided by residues Leu-121 and 125 to 127 (GHL). The residue at position 229 (Lys-229) is an N6-(pyridoxal phosphate)lysine. A (6S)-5,6,7,8-tetrahydrofolate-binding site is contributed by 355–357 (SPF).

The protein belongs to the SHMT family. Homodimer. The cofactor is pyridoxal 5'-phosphate.

It localises to the cytoplasm. It carries out the reaction (6R)-5,10-methylene-5,6,7,8-tetrahydrofolate + glycine + H2O = (6S)-5,6,7,8-tetrahydrofolate + L-serine. The protein operates within one-carbon metabolism; tetrahydrofolate interconversion. It functions in the pathway amino-acid biosynthesis; glycine biosynthesis; glycine from L-serine: step 1/1. Its function is as follows. Catalyzes the reversible interconversion of serine and glycine with tetrahydrofolate (THF) serving as the one-carbon carrier. This reaction serves as the major source of one-carbon groups required for the biosynthesis of purines, thymidylate, methionine, and other important biomolecules. Also exhibits THF-independent aldolase activity toward beta-hydroxyamino acids, producing glycine and aldehydes, via a retro-aldol mechanism. In Stenotrophomonas maltophilia (strain K279a), this protein is Serine hydroxymethyltransferase.